The sequence spans 98 residues: NADH-ubiquinone oxidoreductase chain 4L (98 aa).

3 helical membrane passes run 1–21 (MTLT…GMLT), 27–47 (VASL…ATLI), and 61–81 (IILL…LISI).

It belongs to the complex I subunit 4L family. Core subunit of respiratory chain NADH dehydrogenase (Complex I) which is composed of 45 different subunits.

It is found in the mitochondrion inner membrane. The enzyme catalyses a ubiquinone + NADH + 5 H(+)(in) = a ubiquinol + NAD(+) + 4 H(+)(out). Its function is as follows. Core subunit of the mitochondrial membrane respiratory chain NADH dehydrogenase (Complex I) which catalyzes electron transfer from NADH through the respiratory chain, using ubiquinone as an electron acceptor. Part of the enzyme membrane arm which is embedded in the lipid bilayer and involved in proton translocation. This chain is NADH-ubiquinone oxidoreductase chain 4L (MT-ND4L), found in Macaca mulatta (Rhesus macaque).